Consider the following 699-residue polypeptide: Elongation factor G (699 aa).

The region spanning 8-290 is the tr-type G domain; that stretch reads ERYRNIGIMA…AVLDYLPSPV (283 aa). GTP-binding positions include 17–24, 88–92, and 142–145; these read AHIDAGKT, DTPGH, and NKMD.

It belongs to the TRAFAC class translation factor GTPase superfamily. Classic translation factor GTPase family. EF-G/EF-2 subfamily.

It localises to the cytoplasm. In terms of biological role, catalyzes the GTP-dependent ribosomal translocation step during translation elongation. During this step, the ribosome changes from the pre-translocational (PRE) to the post-translocational (POST) state as the newly formed A-site-bound peptidyl-tRNA and P-site-bound deacylated tRNA move to the P and E sites, respectively. Catalyzes the coordinated movement of the two tRNA molecules, the mRNA and conformational changes in the ribosome. This is Elongation factor G from Acidithiobacillus ferrooxidans (strain ATCC 23270 / DSM 14882 / CIP 104768 / NCIMB 8455) (Ferrobacillus ferrooxidans (strain ATCC 23270)).